A 155-amino-acid chain; its full sequence is Large ribosomal subunit protein uL15 (155 aa).

Residues 1-13 (MKLNELRDCEGAT) are compositionally biased toward basic and acidic residues. The disordered stretch occupies residues 1–47 (MKLNELRDCEGATKNRKRIGRGIGSGTGKTGGRGVKGQKSRSGVSLN). Residues 21–35 (RGIGSGTGKTGGRGV) are compositionally biased toward gly residues.

This sequence belongs to the universal ribosomal protein uL15 family. Part of the 50S ribosomal subunit.

Its function is as follows. Binds to the 23S rRNA. The chain is Large ribosomal subunit protein uL15 from Bartonella tribocorum (strain CIP 105476 / IBS 506).